Reading from the N-terminus, the 475-residue chain is NADH-ubiquinone oxidoreductase chain 2 (475 aa).

Transmembrane regions (helical) follow at residues 45 to 65 (LAVLALSFVAYLAWESIGIQY), 82 to 102 (APIVLLLIILVITLLVYLTTT), 112 to 132 (IALLMLVNLIGLILFPMVNDL), 133 to 153 (IPLYVIIELQSYSLYLLTGVY), 162 to 182 (AAILYFVTGGIASVLILLSSA), 198 to 220 (TYYSISGINTWTSFDILLIALVF), 240 to 260 (LYITAYISIVAKVSIMSFIYL), 262 to 282 (IHLFSTQLLILAFYLSVAVAA), 291 to 311 (IKSILAYSGILNFGYLLTAVL), 318 to 338 (YIYIIQYSLTHVTIFLCILAI), 365 to 385 (LCIALIVCLFSLIGIPPLPGF), 402 to 422 (LEALTIIVFSVIATYYYAYII), and 447 to 467 (FIISILMVILITFYMYLPTLL).

The protein belongs to the complex I subunit 2 family.

The protein resides in the mitochondrion inner membrane. It carries out the reaction a ubiquinone + NADH + 5 H(+)(in) = a ubiquinol + NAD(+) + 4 H(+)(out). Its function is as follows. Core subunit of the mitochondrial membrane respiratory chain NADH dehydrogenase (Complex I) that is believed to belong to the minimal assembly required for catalysis. Complex I functions in the transfer of electrons from NADH to the respiratory chain. The immediate electron acceptor for the enzyme is believed to be ubiquinone. In Candida albicans (strain SC5314 / ATCC MYA-2876) (Yeast), this protein is NADH-ubiquinone oxidoreductase chain 2 (NAD2).